A 231-amino-acid chain; its full sequence is Sensory transduction protein BceR (231 aa).

A Response regulatory domain is found at 3–116 (KIMLIEDDHT…VLVAKIQAIL (114 aa)). Asp52 is modified (4-aspartylphosphate). Residues 127-225 (TQLKTWCGAT…KVGQGYMAKE (99 aa)) constitute a DNA-binding region (ompR/PhoB-type).

Post-translationally, phosphorylated by BceS.

Its subcellular location is the cytoplasm. Its function is as follows. Member of the two-component regulatory system BceS/BceR involved in the regulation of bacitracin resistance. When activated by BceS, binds to the upstream region of the bceAB promoter and up-regulates the expression of these two genes. In Halalkalibacterium halodurans (strain ATCC BAA-125 / DSM 18197 / FERM 7344 / JCM 9153 / C-125) (Bacillus halodurans), this protein is Sensory transduction protein BceR (bceR).